A 549-amino-acid polypeptide reads, in one-letter code: Chaperonin GroEL (549 aa).

ATP is bound by residues 30–33, Lys51, 87–91, Gly415, 479–481, and Asp495; these read TLGP, DGTTT, and NAA.

Belongs to the chaperonin (HSP60) family. In terms of assembly, forms a cylinder of 14 subunits composed of two heptameric rings stacked back-to-back. Interacts with the co-chaperonin GroES.

It localises to the cytoplasm. The enzyme catalyses ATP + H2O + a folded polypeptide = ADP + phosphate + an unfolded polypeptide.. In terms of biological role, together with its co-chaperonin GroES, plays an essential role in assisting protein folding. The GroEL-GroES system forms a nano-cage that allows encapsulation of the non-native substrate proteins and provides a physical environment optimized to promote and accelerate protein folding. The polypeptide is Chaperonin GroEL (Stenotrophomonas maltophilia (strain K279a)).